Reading from the N-terminus, the 133-residue chain is Profilin Sal k 4.0101 (133 aa).

Cys95 and Cys117 form a disulfide bridge.

The protein belongs to the profilin family. In terms of assembly, occurs in many kinds of cells as a complex with monomeric actin in a 1:1 ratio. Expressed in pollen.

It is found in the cytoplasm. Its subcellular location is the cytoskeleton. In terms of biological role, binds to actin and affects the structure of the cytoskeleton. At high concentrations, profilin prevents the polymerization of actin, whereas it enhances it at low concentrations. In Kali turgidum (Prickly saltwort), this protein is Profilin Sal k 4.0101.